A 339-amino-acid polypeptide reads, in one-letter code: NADH-quinone oxidoreductase subunit H (339 aa).

Helical transmembrane passes span 9 to 29, 50 to 70, 82 to 102, 115 to 135, 161 to 181, 187 to 207, 235 to 255, 275 to 295, and 311 to 331; these read IFPL…LILC, PNVV…KLLF, ILFI…WAVI, VGVL…IIAG, MGLV…SGII, MPWW…ISVL, MGFA…SAMT, IPGF…FLWI, and GWKV…SVLV.

This sequence belongs to the complex I subunit 1 family. As to quaternary structure, NDH-1 is composed of 14 different subunits. Subunits NuoA, H, J, K, L, M, N constitute the membrane sector of the complex.

Its subcellular location is the cell inner membrane. The enzyme catalyses a quinone + NADH + 5 H(+)(in) = a quinol + NAD(+) + 4 H(+)(out). Its function is as follows. NDH-1 shuttles electrons from NADH, via FMN and iron-sulfur (Fe-S) centers, to quinones in the respiratory chain. The immediate electron acceptor for the enzyme in this species is believed to be ubiquinone. Couples the redox reaction to proton translocation (for every two electrons transferred, four hydrogen ions are translocated across the cytoplasmic membrane), and thus conserves the redox energy in a proton gradient. This subunit may bind ubiquinone. This chain is NADH-quinone oxidoreductase subunit H, found in Rickettsia felis (strain ATCC VR-1525 / URRWXCal2) (Rickettsia azadi).